Reading from the N-terminus, the 297-residue chain is uncharacterized protein (297 aa).

Glu-46 is an active-site residue.

It belongs to the PhzF family. Homodimer and homotetramer.

This is an uncharacterized protein from Salmonella typhimurium (strain LT2 / SGSC1412 / ATCC 700720).